A 486-amino-acid chain; its full sequence is Glycogen synthase (486 aa).

K15 is a binding site for ADP-alpha-D-glucose.

The protein belongs to the glycosyltransferase 1 family. Bacterial/plant glycogen synthase subfamily.

The catalysed reaction is [(1-&gt;4)-alpha-D-glucosyl](n) + ADP-alpha-D-glucose = [(1-&gt;4)-alpha-D-glucosyl](n+1) + ADP + H(+). It functions in the pathway glycan biosynthesis; glycogen biosynthesis. Its function is as follows. Synthesizes alpha-1,4-glucan chains using ADP-glucose. This Thermotoga petrophila (strain ATCC BAA-488 / DSM 13995 / JCM 10881 / RKU-1) protein is Glycogen synthase.